A 470-amino-acid polypeptide reads, in one-letter code: ATP synthase subunit beta (470 aa).

157–164 (GGAGVGKT) is a binding site for ATP.

Belongs to the ATPase alpha/beta chains family. In terms of assembly, F-type ATPases have 2 components, CF(1) - the catalytic core - and CF(0) - the membrane proton channel. CF(1) has five subunits: alpha(3), beta(3), gamma(1), delta(1), epsilon(1). CF(0) has three main subunits: a(1), b(2) and c(9-12). The alpha and beta chains form an alternating ring which encloses part of the gamma chain. CF(1) is attached to CF(0) by a central stalk formed by the gamma and epsilon chains, while a peripheral stalk is formed by the delta and b chains.

It is found in the cell inner membrane. The enzyme catalyses ATP + H2O + 4 H(+)(in) = ADP + phosphate + 5 H(+)(out). Functionally, produces ATP from ADP in the presence of a proton gradient across the membrane. The catalytic sites are hosted primarily by the beta subunits. This is ATP synthase subunit beta from Geotalea uraniireducens (strain Rf4) (Geobacter uraniireducens).